The sequence spans 134 residues: ATP synthase epsilon chain (134 aa).

Belongs to the ATPase epsilon chain family. In terms of assembly, F-type ATPases have 2 components, CF(1) - the catalytic core - and CF(0) - the membrane proton channel. CF(1) has five subunits: alpha(3), beta(3), gamma(1), delta(1), epsilon(1). CF(0) has three main subunits: a, b and c.

It localises to the cell membrane. In terms of biological role, produces ATP from ADP in the presence of a proton gradient across the membrane. This chain is ATP synthase epsilon chain, found in Ruminococcus albus (strain ATCC 27210 / DSM 20455 / JCM 14654 / NCDO 2250 / 7).